The following is a 51-amino-acid chain: Large ribosomal subunit protein eL39 (51 aa).

This sequence belongs to the eukaryotic ribosomal protein eL39 family.

This chain is Large ribosomal subunit protein eL39, found in Hyperthermus butylicus (strain DSM 5456 / JCM 9403 / PLM1-5).